Consider the following 1406-residue polypeptide: DNA-directed RNA polymerase subunit beta' (1406 aa).

C70, C72, C85, and C88 together coordinate Zn(2+). Mg(2+)-binding residues include D460, D462, and D464. Positions 814, 889, 896, and 899 each coordinate Zn(2+).

The protein belongs to the RNA polymerase beta' chain family. As to quaternary structure, the RNAP catalytic core consists of 2 alpha, 1 beta, 1 beta' and 1 omega subunit. When a sigma factor is associated with the core the holoenzyme is formed, which can initiate transcription. It depends on Mg(2+) as a cofactor. Requires Zn(2+) as cofactor.

It carries out the reaction RNA(n) + a ribonucleoside 5'-triphosphate = RNA(n+1) + diphosphate. Its function is as follows. DNA-dependent RNA polymerase catalyzes the transcription of DNA into RNA using the four ribonucleoside triphosphates as substrates. The sequence is that of DNA-directed RNA polymerase subunit beta' from Psychromonas ingrahamii (strain DSM 17664 / CCUG 51855 / 37).